The primary structure comprises 496 residues: Transcription factor CP2 (496 aa).

The Grh/CP2 DB domain occupies 61-300 (ENKILPFQYV…SPGFNSSHSS (240 aa)). The segment at 133-386 (EHQQLEGWRW…LFNALKGRMV (254 aa)) is DNA-binding. Disordered stretches follow at residues 238–268 (FKPKGADRKQKTDREKMEKRTPHEKEKYQPS) and 296–327 (SSHSSFSIGEGNGSPNHQPEPPPPIADNLLPT). Basic and acidic residues predominate over residues 241–265 (KGADRKQKTDREKMEKRTPHEKEKY).

Belongs to the grh/CP2 family. CP2 subfamily. Component of the SSP (stage selector protein) complex, which appears to be a heteromer of TFCP2 and 2 copies of NFE4. Expressed in the epiblast at the pre-primitive streak stage. At the primitive streak stage, expressed in the extending primitive streak and in the prospective neural plate. At stages 7 and 8, expressed in the neural folds, somites and in the regressing primitive streak. At stage 12, ubiquitously expressed in the whole embryo.

It localises to the nucleus. Binds the B-response element 5'-CAAGTCCAGGCAAGT-3' of the ENS1/ERNI promoter. May be the major transcription activator thus being essential for its expression. This Gallus gallus (Chicken) protein is Transcription factor CP2 (TFCP2).